The primary structure comprises 667 residues: Fatty acyl-CoA synthetase A (667 aa).

Belongs to the ATP-dependent AMP-binding enzyme family.

The protein resides in the endosome membrane. The enzyme catalyses a long-chain fatty acid + ATP + CoA = a long-chain fatty acyl-CoA + AMP + diphosphate. Its function is as follows. Long chain fatty acid acyl-CoA synthetases catalyze the formation of a thiester bond between a free fatty acid and coenzyme A during fatty acid metabolic process. May mediate fatty acid retrieval from the lumen of endosomes into the cytoplasm. This Dictyostelium discoideum (Social amoeba) protein is Fatty acyl-CoA synthetase A (fcsA).